We begin with the raw amino-acid sequence, 426 residues long: Glutamyl-tRNA reductase (426 aa).

Residues 49–52 (TCNR), Ser107, 112–114 (EPQ), and Gln118 each bind substrate. Cys50 serves as the catalytic Nucleophile. Residue 187 to 192 (GAGETI) participates in NADP(+) binding.

Belongs to the glutamyl-tRNA reductase family. As to quaternary structure, homodimer.

It catalyses the reaction (S)-4-amino-5-oxopentanoate + tRNA(Glu) + NADP(+) = L-glutamyl-tRNA(Glu) + NADPH + H(+). It participates in porphyrin-containing compound metabolism; protoporphyrin-IX biosynthesis; 5-aminolevulinate from L-glutamyl-tRNA(Glu): step 1/2. Catalyzes the NADPH-dependent reduction of glutamyl-tRNA(Glu) to glutamate 1-semialdehyde (GSA). The chain is Glutamyl-tRNA reductase from Ectopseudomonas mendocina (strain ymp) (Pseudomonas mendocina).